Consider the following 1400-residue polypeptide: Macrophage-stimulating protein receptor (1400 aa).

Residues 1 to 24 (MELLPPLPQSFLLLLLLPAKPAAG) form the signal peptide. Residues 25-957 (EDWQCPRTPY…PGPDGVPQST (933 aa)) are Extracellular-facing. In terms of domain architecture, Sema spans 31 to 522 (RTPYAASRDF…SGDQVFQVPI (492 aa)). N-linked (GlcNAc...) asparagine glycosylation occurs at Asn-66. 7 disulfides stabilise this stretch: Cys-101-Cys-104, Cys-107-Cys-162, Cys-135-Cys-143, Cys-174-Cys-177, Cys-300-Cys-367, Cys-385-Cys-407, and Cys-386-Cys-422. N-linked (GlcNAc...) asparagine glycosylation is found at Asn-419, Asn-458, and Asn-488. 4 disulfides stabilise this stretch: Cys-527-Cys-545, Cys-533-Cys-567, Cys-536-Cys-552, and Cys-548-Cys-558. 3 consecutive IPT/TIG domains span residues 569-671 (PKLT…FRVD), 684-767 (PVLI…FQYR), and 770-860 (PVVL…FRFL). N-linked (GlcNAc...) asparagine glycosylation is found at Asn-654, Asn-720, Asn-841, and Asn-897. Residues 958–978 (LLGILLPLLLLVAALATALVF) form a helical membrane-spanning segment. At 979-1400 (SYWWRRKQLV…RPLSEPPRPT (422 aa)) the chain is on the cytoplasmic side. The 264-residue stretch at 1082-1345 (THSDRVIGKG…VLVGEVEQIV (264 aa)) folds into the Protein kinase domain. ATP-binding positions include 1088–1096 (IGKGHFGVV), Lys-1114, and 1161–1164 (LPYM). Asp-1208 acts as the Proton acceptor in catalysis. Arg-1212 provides a ligand contact to ATP. Phosphotyrosine; by autocatalysis occurs at positions 1238, 1239, 1353, and 1360. Residues 1367–1400 (TSHEMNVRPEQPQFSPMPGNVRRPRPLSEPPRPT) form a disordered region.

Belongs to the protein kinase superfamily. Tyr protein kinase family. As to quaternary structure, heterodimer of an alpha chain and a beta chain which are disulfide linked. Binds PLXNB1. Associates with and is negatively regulated by HYAL2. Interacts when phosphorylated with downstream effectors including PIK3R1, PCLG1, GRB2 and GAB1. Interacts with integrin beta1/ITGB1 in a ligand-independent fashion. Proteolytic processing yields the two subunits. In terms of processing, autophosphorylated in response to ligand binding on Tyr-1238 and Tyr-1239 in the kinase domain leading to further phosphorylation of Tyr-1353 and Tyr-1360 in the C-terminal multifunctional docking site. Post-translationally, ubiquitinated. Ubiquitination by CBL regulates the receptor stability and activity through proteasomal degradation. O-mannosylation of IPT/TIG domains on Thr or Ser residues by TMEM260 is required for protein maturation. O-mannosylated residues are composed of single mannose glycans that are not elongated or modified. As to expression, expressed in colon, skin, lung and bone marrow.

It localises to the membrane. It carries out the reaction L-tyrosyl-[protein] + ATP = O-phospho-L-tyrosyl-[protein] + ADP + H(+). Its activity is regulated as follows. In its inactive state, the C-terminal tail interacts with the catalytic domain and inhibits the kinase activity. Upon ligand binding, the C-terminal tail is displaced and becomes phosphorylated, thus increasing the kinase activity. Functionally, receptor tyrosine kinase that transduces signals from the extracellular matrix into the cytoplasm by binding to MST1 ligand. Regulates many physiological processes including cell survival, migration and differentiation. Ligand binding at the cell surface induces autophosphorylation of RON on its intracellular domain that provides docking sites for downstream signaling molecules. Following activation by ligand, interacts with the PI3-kinase subunit PIK3R1, PLCG1 or the adapter GAB1. Recruitment of these downstream effectors by RON leads to the activation of several signaling cascades including the RAS-ERK, PI3 kinase-AKT, or PLCgamma-PKC. RON signaling activates the wound healing response by promoting epithelial cell migration, proliferation as well as survival at the wound site. Also plays a role in the innate immune response by regulating the migration and phagocytic activity of macrophages. Alternatively, RON can also promote signals such as cell migration and proliferation in response to growth factors other than MST1 ligand. The sequence is that of Macrophage-stimulating protein receptor (MST1R) from Homo sapiens (Human).